Reading from the N-terminus, the 355-residue chain is UDP-N-acetylglucosamine--N-acetylmuramyl-(pentapeptide) pyrophosphoryl-undecaprenol N-acetylglucosamine transferase (355 aa).

Residues 15–17, asparagine 127, arginine 163, serine 191, isoleucine 244, 263–268, and glutamine 288 each bind UDP-N-acetyl-alpha-D-glucosamine; these read TGG and ALTVSE.

This sequence belongs to the glycosyltransferase 28 family. MurG subfamily.

Its subcellular location is the cell inner membrane. The enzyme catalyses di-trans,octa-cis-undecaprenyl diphospho-N-acetyl-alpha-D-muramoyl-L-alanyl-D-glutamyl-meso-2,6-diaminopimeloyl-D-alanyl-D-alanine + UDP-N-acetyl-alpha-D-glucosamine = di-trans,octa-cis-undecaprenyl diphospho-[N-acetyl-alpha-D-glucosaminyl-(1-&gt;4)]-N-acetyl-alpha-D-muramoyl-L-alanyl-D-glutamyl-meso-2,6-diaminopimeloyl-D-alanyl-D-alanine + UDP + H(+). Its pathway is cell wall biogenesis; peptidoglycan biosynthesis. Its function is as follows. Cell wall formation. Catalyzes the transfer of a GlcNAc subunit on undecaprenyl-pyrophosphoryl-MurNAc-pentapeptide (lipid intermediate I) to form undecaprenyl-pyrophosphoryl-MurNAc-(pentapeptide)GlcNAc (lipid intermediate II). The sequence is that of UDP-N-acetylglucosamine--N-acetylmuramyl-(pentapeptide) pyrophosphoryl-undecaprenol N-acetylglucosamine transferase from Shigella flexneri serotype 5b (strain 8401).